A 180-amino-acid polypeptide reads, in one-letter code: Translation initiation factor IF-3 (180 aa).

The protein belongs to the IF-3 family. Monomer.

The protein resides in the cytoplasm. In terms of biological role, IF-3 binds to the 30S ribosomal subunit and shifts the equilibrium between 70S ribosomes and their 50S and 30S subunits in favor of the free subunits, thus enhancing the availability of 30S subunits on which protein synthesis initiation begins. This chain is Translation initiation factor IF-3, found in Salmonella paratyphi A (strain ATCC 9150 / SARB42).